Here is a 311-residue protein sequence, read N- to C-terminus: Ribosomal RNA small subunit methyltransferase H (311 aa).

S-adenosyl-L-methionine-binding positions include 32–34 (AGH), Asp-52, Phe-79, Asp-100, and Gln-107. The segment covering 289 to 298 (SKEELEENNR) has biased composition (basic and acidic residues). The disordered stretch occupies residues 289–311 (SKEELEENNRARSAKLRIAEKRK). Basic residues predominate over residues 300–311 (RSAKLRIAEKRK).

The protein belongs to the methyltransferase superfamily. RsmH family.

Its subcellular location is the cytoplasm. The catalysed reaction is cytidine(1402) in 16S rRNA + S-adenosyl-L-methionine = N(4)-methylcytidine(1402) in 16S rRNA + S-adenosyl-L-homocysteine + H(+). Functionally, specifically methylates the N4 position of cytidine in position 1402 (C1402) of 16S rRNA. The protein is Ribosomal RNA small subunit methyltransferase H of Bacillus velezensis (strain DSM 23117 / BGSC 10A6 / LMG 26770 / FZB42) (Bacillus amyloliquefaciens subsp. plantarum).